The chain runs to 546 residues: Glucose-6-phosphate isomerase (546 aa).

E357 acts as the Proton donor in catalysis. Residues H389 and K509 contribute to the active site.

This sequence belongs to the GPI family.

Its subcellular location is the cytoplasm. The catalysed reaction is alpha-D-glucose 6-phosphate = beta-D-fructose 6-phosphate. Its pathway is carbohydrate biosynthesis; gluconeogenesis. The protein operates within carbohydrate degradation; glycolysis; D-glyceraldehyde 3-phosphate and glycerone phosphate from D-glucose: step 2/4. Its function is as follows. Catalyzes the reversible isomerization of glucose-6-phosphate to fructose-6-phosphate. This is Glucose-6-phosphate isomerase from Anaeromyxobacter dehalogenans (strain 2CP-1 / ATCC BAA-258).